We begin with the raw amino-acid sequence, 292 residues long: Mitochondrial ornithine transporter 1 (292 aa).

Solcar repeat units follow at residues 11-97 (EGAI…CSKF), 105-196 (SPLG…VKKS), and 211-292 (SKIW…LSAL). A run of 6 helical transmembrane segments spans residues 14–34 (ILDIINGSIAGACGKVIEFPF), 69–89 (FFQGIASPLVGACLENATLFV), 104–124 (VSPLGQILISGGVAGSCASLV), 171–187 (GQSGTFIRESFGGVAWF), 213–233 (IWELLISGGSAGLAFNASIFP), and 267–287 (GLGITLFRAVPANAAVFYIFE).

It belongs to the mitochondrial carrier (TC 2.A.29) family.

The protein localises to the mitochondrion inner membrane. Its function is as follows. Required for arginine biosynthesis. Transports ornithine synthesized from glutamate in the mitochondrial matrix to the cytosol, where it is converted to arginine. The chain is Mitochondrial ornithine transporter 1 (ORT1) from Saccharomyces cerevisiae (strain ATCC 204508 / S288c) (Baker's yeast).